The following is a 144-amino-acid chain: Glycine-rich protein DC9.1 (144 aa).

The helical transmembrane segment at 5–25 (IFLLLGLSIAFAILISSEVAA) threads the bilayer. 11 tandem repeats follow at residues 37 to 42 (GYNNGG), 43 to 48 (GYHNGG), 50 to 55 (GYNNGG), 56 to 61 (GYHNGG), 63 to 68 (GYNNGG), 69 to 74 (GYHNGG), 76 to 81 (GYNNGG), 82 to 87 (GYHNGG), 89 to 94 (GYNNGG), 102 to 107 (GYNNGG), and 108 to 113 (GHHGGG). An 11 X 6 AA tandem repeats of G-Y-[NH]-N-G -G region spans residues 37-113 (GYNNGGGYHN…NNGGGHHGGG (77 aa)).

Belongs to the GRP family.

It localises to the membrane. This chain is Glycine-rich protein DC9.1, found in Daucus carota (Wild carrot).